Here is a 388-residue protein sequence, read N- to C-terminus: Tryptophan synthase beta chain (388 aa).

An N6-(pyridoxal phosphate)lysine modification is found at lysine 86.

Belongs to the TrpB family. As to quaternary structure, tetramer of two alpha and two beta chains. Pyridoxal 5'-phosphate serves as cofactor.

The enzyme catalyses (1S,2R)-1-C-(indol-3-yl)glycerol 3-phosphate + L-serine = D-glyceraldehyde 3-phosphate + L-tryptophan + H2O. It functions in the pathway amino-acid biosynthesis; L-tryptophan biosynthesis; L-tryptophan from chorismate: step 5/5. The beta subunit is responsible for the synthesis of L-tryptophan from indole and L-serine. The chain is Tryptophan synthase beta chain (trpB) from Buchnera aphidicola subsp. Acyrthosiphon pisum (strain APS) (Acyrthosiphon pisum symbiotic bacterium).